We begin with the raw amino-acid sequence, 221 residues long: Glutathione S-transferase class-mu 26 kDa isozyme 1 (221 aa).

In terms of domain architecture, GST N-terminal spans 2–82 (PAKLGYWKIR…YIADKHGMIG (81 aa)). Glutathione contacts are provided by residues 7–8 (YW), 40–44 (WFSKK), 53–54 (NL), and 66–67 (QS). A GST C-terminal domain is found at 84-202 (TPEERARVSM…ESNRFIKWPL (119 aa)). Tyr-110 contacts substrate.

Belongs to the GST superfamily. Mu family. In terms of assembly, homodimer.

It carries out the reaction RX + glutathione = an S-substituted glutathione + a halide anion + H(+). In terms of biological role, conjugation of reduced glutathione to a wide number of exogenous and endogenous hydrophobic electrophiles. Its function is as follows. GST isoenzymes appear to play a central role in the parasite detoxification system. Other functions are also suspected including a role in increasing the solubility of haematin in the parasite gut. The polypeptide is Glutathione S-transferase class-mu 26 kDa isozyme 1 (Fasciola hepatica (Liver fluke)).